The primary structure comprises 744 residues: Catalase-peroxidase (744 aa).

The N-terminal stretch at 1–22 is a signal peptide; that stretch reads MSPRARRCTDRCARMSERSMNA. The tryptophyl-tyrosyl-methioninium (Trp-Tyr) (with M-260) cross-link spans 114-234; the sequence is WHSAGTYRLA…LGATEMGLIY (121 aa). The active-site Proton acceptor is the His-115. The tryptophyl-tyrosyl-methioninium (Tyr-Met) (with W-114) cross-link spans 234 to 260; sequence YVNPEGPDRNGDPISAAKFIRETFARM. His-275 lines the heme b pocket.

The protein belongs to the peroxidase family. Peroxidase/catalase subfamily. As to quaternary structure, homodimer or homotetramer. Requires heme b as cofactor. In terms of processing, formation of the three residue Trp-Tyr-Met cross-link is important for the catalase, but not the peroxidase activity of the enzyme.

It carries out the reaction H2O2 + AH2 = A + 2 H2O. It catalyses the reaction 2 H2O2 = O2 + 2 H2O. Functionally, bifunctional enzyme with both catalase and broad-spectrum peroxidase activity. The polypeptide is Catalase-peroxidase (Azorhizobium caulinodans (strain ATCC 43989 / DSM 5975 / JCM 20966 / LMG 6465 / NBRC 14845 / NCIMB 13405 / ORS 571)).